Here is a 279-residue protein sequence, read N- to C-terminus: Probable diacylglycerol pyrophosphate phosphatase 1 (279 aa).

Residues Met1–Asp17 lie on the Lumenal side of the membrane. A helical transmembrane segment spans residues Tyr18 to Phe38. Over Thr39–Gln58 the chain is Cytoplasmic. Residues Val59–Phe79 traverse the membrane as a helical segment. At Gly80–Ser86 the chain is on the lumenal side. Residues Leu87–Val107 traverse the membrane as a helical segment. Residues Ser108–Thr163 are Cytoplasmic-facing. A phosphatase sequence motif I region spans residues Lys111–Pro119. The phosphatase sequence motif II stretch occupies residues Pro159 to His162. Residues Ser164 to Phe184 traverse the membrane as a helical segment. Residues Arg185–Lys187 lie on the Lumenal side of the membrane. The chain crosses the membrane as a helical span at residues Thr188–Leu208. The Cytoplasmic segment spans residues Ser209–Asp220. Residues Ser209–Asp220 form a phosphatase sequence motif III region. The chain crosses the membrane as a helical span at residues Ile221 to Pro241. Residues Pro242–Val279 lie on the Lumenal side of the membrane.

Belongs to the PA-phosphatase related phosphoesterase family.

It is found in the vacuole membrane. It localises to the endoplasmic reticulum membrane. It catalyses the reaction a 1,2-diacyl-sn-glycerol 3-diphosphate + H2O = a 1,2-diacyl-sn-glycero-3-phosphate + phosphate + H(+). The catalysed reaction is a 1,2-diacyl-sn-glycero-3-phosphate + H2O = a 1,2-diacyl-sn-glycerol + phosphate. Its function is as follows. Catalyzes the dephosphorylation of diacylglycerol phosphate (DGPP) to phosphatidate (PA) and the subsequent dephosphorylation of PA to diacylglycerol (DAG). The sequence is that of Probable diacylglycerol pyrophosphate phosphatase 1 (dpp1) from Schizosaccharomyces pombe (strain 972 / ATCC 24843) (Fission yeast).